Consider the following 455-residue polypeptide: Virion host shutoff protein (455 aa).

The protein belongs to the herpesviridae VHS protein family.

Its subcellular location is the virion. Functionally, minor structural protein that acts as an endoribonuclease during lytic infection. Degrades host mRNAs in the cytoplasm by cutting them at preferred sites, including some in regions of translation initiation. The chain is Virion host shutoff protein (17) from Homo sapiens (Human).